The sequence spans 417 residues: Cobalamin binding intrinsic factor (417 aa).

Residues 1–18 (MAWLSFYLLNVLWAVAGT) form the signal peptide. 3 disulfides stabilise this stretch: cysteine 26–cysteine 246, cysteine 103–cysteine 288, and cysteine 143–cysteine 182. Aspartate 171 is a cob(II)alamin binding site. Serine 191 bears the Phosphoserine mark. Asparagine 209 is a glycosylation site (N-linked (GlcNAc...) asparagine). Cob(II)alamin contacts are provided by aspartate 222 and glutamine 270. N-linked (GlcNAc...) asparagine glycosylation is found at asparagine 311 and asparagine 330. Residues 365-370 (SWGLIV) and 386-395 (WEFLSGKTPL) contribute to the cob(II)alamin site. Residue asparagine 413 is glycosylated (N-linked (GlcNAc...) asparagine).

Belongs to the eukaryotic cobalamin transport proteins family. As to quaternary structure, interacts with CUBN (via CUB domains). The N-terminus is blocked. In terms of tissue distribution, gastric mucosa.

The protein resides in the secreted. Promotes absorption of the essential vitamin cobalamin (Cbl) in the ileum. After interaction with CUBN, the CBLIF-cobalamin complex is internalized via receptor-mediated endocytosis. The protein is Cobalamin binding intrinsic factor of Rattus norvegicus (Rat).